The following is a 57-amino-acid chain: MALTCTDIPKFLCALLLPPIGVWLEKGCTYHLAINILLTILGYIPGIIHACYVILAY.

2 helical membrane-spanning segments follow: residues Leu-3–Trp-23 and Ile-36–Ala-56.

Belongs to the UPF0057 (PMP3) family.

The protein localises to the membrane. This is UPF0057 membrane protein T23F2.5 from Caenorhabditis elegans.